The chain runs to 143 residues: Transcriptional regulator MraZ (143 aa).

SpoVT-AbrB domains lie at 5–47 (EYEH…TLEE) and 76–119 (AVEV…DRET).

It belongs to the MraZ family. In terms of assembly, forms oligomers.

The protein resides in the cytoplasm. It is found in the nucleoid. The polypeptide is Transcriptional regulator MraZ (Staphylococcus saprophyticus subsp. saprophyticus (strain ATCC 15305 / DSM 20229 / NCIMB 8711 / NCTC 7292 / S-41)).